Consider the following 319-residue polypeptide: Tetrahydromethanopterin S-methyltransferase subunit H (319 aa).

The protein belongs to the MtrH family. The complex is composed of 8 subunits; MtrA, MtrB, MtrC, MtrD, MtrE, MtrF, MtrG and MtrH.

It carries out the reaction 5-methyl-5,6,7,8-tetrahydromethanopterin + coenzyme M + 2 Na(+)(in) = 5,6,7,8-tetrahydromethanopterin + methyl-coenzyme M + 2 Na(+)(out). The protein operates within one-carbon metabolism; methanogenesis from CO(2); methyl-coenzyme M from 5,10-methylene-5,6,7,8-tetrahydromethanopterin: step 2/2. Its function is as follows. Part of a complex that catalyzes the formation of methyl-coenzyme M and tetrahydromethanopterin from coenzyme M and methyl-tetrahydromethanopterin. This is an energy-conserving, sodium-ion translocating step. MtrH catalyzes the transfer of the methyl group from methyl-tetrahydromethanopterin to the corrinoid prosthetic group of MtrA. This chain is Tetrahydromethanopterin S-methyltransferase subunit H, found in Methanococcus vannielii (strain ATCC 35089 / DSM 1224 / JCM 13029 / OCM 148 / SB).